The chain runs to 91 residues: Cell division topological specificity factor (91 aa).

This sequence belongs to the MinE family.

In terms of biological role, prevents the cell division inhibition by proteins MinC and MinD at internal division sites while permitting inhibition at polar sites. This ensures cell division at the proper site by restricting the formation of a division septum at the midpoint of the long axis of the cell. The chain is Cell division topological specificity factor from Thermoanaerobacter pseudethanolicus (strain ATCC 33223 / 39E) (Clostridium thermohydrosulfuricum).